We begin with the raw amino-acid sequence, 166 residues long: Large ribosomal subunit protein mL49 (166 aa).

The tract at residues 56–78 (RIPDPPKHEHYPTPSGWQPPRDP) is disordered.

The protein belongs to the mitochondrion-specific ribosomal protein mL49 family. As to quaternary structure, interacts with OXA1L.

It is found in the mitochondrion. The protein is Large ribosomal subunit protein mL49 (MRPL49) of Macaca fascicularis (Crab-eating macaque).